The primary structure comprises 99 residues: Small ribosomal subunit protein bS6 (99 aa).

It belongs to the bacterial ribosomal protein bS6 family.

Its function is as follows. Binds together with bS18 to 16S ribosomal RNA. In Lactiplantibacillus plantarum (strain ATCC BAA-793 / NCIMB 8826 / WCFS1) (Lactobacillus plantarum), this protein is Small ribosomal subunit protein bS6.